Consider the following 115-residue polypeptide: NADH-ubiquinone oxidoreductase chain 3 (115 aa).

Helical transmembrane passes span 3 to 23 (LIMV…VAFW), 55 to 75 (FFLV…LLPI), and 84 to 104 (INTM…GLAY).

This sequence belongs to the complex I subunit 3 family. As to quaternary structure, core subunit of respiratory chain NADH dehydrogenase (Complex I) which is composed of 45 different subunits. Interacts with TMEM186. Interacts with TMEM242.

Its subcellular location is the mitochondrion inner membrane. The enzyme catalyses a ubiquinone + NADH + 5 H(+)(in) = a ubiquinol + NAD(+) + 4 H(+)(out). In terms of biological role, core subunit of the mitochondrial membrane respiratory chain NADH dehydrogenase (Complex I) which catalyzes electron transfer from NADH through the respiratory chain, using ubiquinone as an electron acceptor. Essential for the catalytic activity of complex I. This Scotinomys teguina (Alston's brown mouse) protein is NADH-ubiquinone oxidoreductase chain 3.